Here is a 202-residue protein sequence, read N- to C-terminus: FMN-dependent NADH:quinone oxidoreductase (202 aa).

FMN contacts are provided by residues S9, 15-17 (SAS), 95-98 (MYNF), and 139-142 (TSGG).

This sequence belongs to the azoreductase type 1 family. In terms of assembly, homodimer. FMN is required as a cofactor.

The catalysed reaction is 2 a quinone + NADH + H(+) = 2 a 1,4-benzosemiquinone + NAD(+). It carries out the reaction N,N-dimethyl-1,4-phenylenediamine + anthranilate + 2 NAD(+) = 2-(4-dimethylaminophenyl)diazenylbenzoate + 2 NADH + 2 H(+). In terms of biological role, quinone reductase that provides resistance to thiol-specific stress caused by electrophilic quinones. Also exhibits azoreductase activity. Catalyzes the reductive cleavage of the azo bond in aromatic azo compounds to the corresponding amines. This is FMN-dependent NADH:quinone oxidoreductase from Pseudomonas savastanoi pv. phaseolicola (strain 1448A / Race 6) (Pseudomonas syringae pv. phaseolicola (strain 1448A / Race 6)).